We begin with the raw amino-acid sequence, 377 residues long: UPF0754 membrane protein lmo2224 (377 aa).

A run of 2 helical transmembrane segments spans residues 1 to 21 (MSVLFTILLMAVIGGFIGAMT) and 357 to 377 (YLGGILGGFIGIIQGILAMWI).

This sequence belongs to the UPF0754 family.

It is found in the cell membrane. The protein is UPF0754 membrane protein lmo2224 of Listeria monocytogenes serovar 1/2a (strain ATCC BAA-679 / EGD-e).